The sequence spans 268 residues: Malonyl-[acyl-carrier protein] O-methyltransferase 1 (268 aa).

The protein belongs to the methyltransferase superfamily.

The catalysed reaction is malonyl-[ACP] + S-adenosyl-L-methionine = malonyl-[ACP] methyl ester + S-adenosyl-L-homocysteine. Its pathway is cofactor biosynthesis; biotin biosynthesis. Functionally, converts the free carboxyl group of a malonyl-thioester to its methyl ester by transfer of a methyl group from S-adenosyl-L-methionine (SAM). It allows to synthesize pimeloyl-ACP via the fatty acid synthetic pathway. The polypeptide is Malonyl-[acyl-carrier protein] O-methyltransferase 1 (Ilyobacter polytropus (strain ATCC 51220 / DSM 2926 / LMG 16218 / CuHBu1)).